Here is a 202-residue protein sequence, read N- to C-terminus: ADP-ribosylation factor-like protein 15 (202 aa).

Residues 39-46, 82-86, and 142-145 contribute to the GTP site; these read GLTGSGKT, ELGGA, and NHQD.

It belongs to the small GTPase superfamily. Arf family.

The protein is ADP-ribosylation factor-like protein 15 (ARL15) of Bos taurus (Bovine).